The following is a 581-amino-acid chain: Pre-mRNA 3'-end-processing factor FIP1 (581 aa).

2 stretches are compositionally biased toward basic and acidic residues: residues methionine 1–valine 10 and valine 32–leucine 42. Disordered regions lie at residues methionine 1 to valine 95, threonine 211 to aspartate 282, and arginine 320 to glutamate 581. The interval methionine 1 to glycine 110 is sufficient for interaction with PAPOLA. The necessary for stimulating PAPOLA activity stretch occupies residues methionine 1–proline 332. Composition is skewed to acidic residues over residues aspartate 43–asparagine 54 and threonine 80–aspartate 94. Serine 84, serine 86, and serine 88 each carry phosphoserine. A sufficient for interaction with CPSF4 region spans residues lysine 136–asparagine 219. Over residues serine 247–serine 267 the composition is skewed to low complexity. The segment covering tryptophan 271 to aspartate 282 has biased composition (basic and acidic residues). Position 280 is a phosphoserine (serine 280). Residues arginine 320–serine 330 are compositionally biased toward polar residues. Residues lysine 331 to leucine 389 are compositionally biased toward pro residues. Phosphotyrosine is present on tyrosine 411. A compositionally biased stretch (polar residues) spans leucine 419–glutamine 435. Positions serine 428–glutamate 581 are sufficient for interaction with CPSF1 and CSTF3. Positions tyrosine 439 to serine 479 are enriched in basic and acidic residues. An arg/Asp/Glu-rich domain region spans residues arginine 442 to aspartate 477. Residues histidine 478 to serine 535 are sufficient for interaction with AHCYL1. Phosphoserine is present on serine 479. Threonine 481 is modified (phosphothreonine). Residues serine 483 and serine 487 each carry the phosphoserine modification. Positions aspartate 488–histidine 515 are enriched in basic and acidic residues. Residues lysine 529–arginine 538 are compositionally biased toward basic residues. Serine 541 carries the post-translational modification Phosphoserine. Over residues histidine 547 to arginine 557 the composition is skewed to basic residues.

The protein belongs to the FIP1 family. Component of the cleavage and polyadenylation specificity factor (CPSF) complex, composed of CPSF1, CPSF2, CPSF3, CPSF4 and FIP1L1. Found in a complex with CPSF1, FIP1L1 and PAPOLA. Interacts with CPSF1, CPSF4, CSTF2 and CSTF3. Interacts with AHCYL1 (when phosphorylated); the interaction is direct and associates AHCYL1 with the CPSF complex and RNA. Interacts with PAPOLA; the interaction seems to be increased by the interaction with AHCYL1. Interacts with NUDT21/CPSF5; this interaction occurs in a RNA sequence-specific manner. Interacts (preferentially via unphosphorylated form and Arg/Glu/Asp-rich domain) with CPSF6 (via Arg/Ser-rich domain); this interaction mediates, at least in part, the interaction between the CFIm and CPSF complexes and may be inhibited by CPSF6 hyper-phosphorylation. Interacts (preferentially via unphosphorylated form and Arg/Asp/Glu-rich domain) with CPSF7 (via Arg/Ser-rich domain); this interaction mediates, at least in part, the interaction between the CFIm and CPSF complexes and may be inhibited by CPSF7 hyper-phosphorylation.

It is found in the nucleus. Its function is as follows. Component of the cleavage and polyadenylation specificity factor (CPSF) complex that plays a key role in pre-mRNA 3'-end formation, recognizing the AAUAAA signal sequence and interacting with poly(A) polymerase and other factors to bring about cleavage and poly(A) addition. FIP1L1 contributes to poly(A) site recognition and stimulates poly(A) addition. Binds to U-rich RNA sequence elements surrounding the poly(A) site. May act to tether poly(A) polymerase to the CPSF complex. This is Pre-mRNA 3'-end-processing factor FIP1 (Fip1l1) from Mus musculus (Mouse).